The sequence spans 228 residues: Probable GTP-binding protein EngB (228 aa).

Positions 48-222 (YGLEVAFVGY…QFVLNNWFSS (175 aa)) constitute an EngB-type G domain. Residues 56 to 63 (GYSNSGKS), 83 to 87 (GRTRL), 101 to 104 (DFPG), 168 to 171 (NKMD), and 201 to 203 (FSS) each bind GTP. Mg(2+)-binding residues include Ser-63 and Thr-85.

It belongs to the TRAFAC class TrmE-Era-EngA-EngB-Septin-like GTPase superfamily. EngB GTPase family. Requires Mg(2+) as cofactor.

In terms of biological role, necessary for normal cell division and for the maintenance of normal septation. The sequence is that of Probable GTP-binding protein EngB from Buchnera aphidicola subsp. Baizongia pistaciae (strain Bp).